The primary structure comprises 278 residues: Phosphonates import ATP-binding protein PhnC 1 (278 aa).

The region spanning 5 to 253 is the ABC transporter domain; that stretch reads IRVDSLNKTF…FLNELYGAEG (249 aa). 37–44 lines the ATP pocket; that stretch reads GASGSGKS.

It belongs to the ABC transporter superfamily. Phosphonates importer (TC 3.A.1.9.1) family. The complex is composed of two ATP-binding proteins (PhnC), two transmembrane proteins (PhnE) and a solute-binding protein (PhnD).

It localises to the cell inner membrane. It carries out the reaction phosphonate(out) + ATP + H2O = phosphonate(in) + ADP + phosphate + H(+). Its function is as follows. Part of the ABC transporter complex PhnCDE involved in phosphonates import. Responsible for energy coupling to the transport system. In Pseudomonas aeruginosa (strain UCBPP-PA14), this protein is Phosphonates import ATP-binding protein PhnC 1.